Here is a 629-residue protein sequence, read N- to C-terminus: tRNA uridine 5-carboxymethylaminomethyl modification enzyme MnmG (629 aa).

13–18 (GGGHAG) contacts FAD. Position 273–287 (273–287 (GPRYCPSIEDKIHRF)) interacts with NAD(+).

This sequence belongs to the MnmG family. Homodimer. Heterotetramer of two MnmE and two MnmG subunits. It depends on FAD as a cofactor.

The protein resides in the cytoplasm. In terms of biological role, NAD-binding protein involved in the addition of a carboxymethylaminomethyl (cmnm) group at the wobble position (U34) of certain tRNAs, forming tRNA-cmnm(5)s(2)U34. This Shewanella baltica (strain OS155 / ATCC BAA-1091) protein is tRNA uridine 5-carboxymethylaminomethyl modification enzyme MnmG.